The primary structure comprises 424 residues: 3-ketoacyl-CoA thiolase, peroxisomal (424 aa).

A peroxisome-targeting transit peptide spans 1–26 (MQRLQVVLGHLRGPADSGWMPQAAPC). Residues 1–26 (MQRLQVVLGHLRGPADSGWMPQAAPC) form a PTS2-type peroxisomal targeting signal region. A phosphothreonine mark is found at Thr-59 and Thr-60. The active-site Acyl-thioester intermediate is the Cys-123. Active-site proton acceptor residues include His-377 and Cys-408.

Belongs to the thiolase-like superfamily. Thiolase family. In terms of assembly, homodimer. Interacts (via PTS2-type peroxisomal targeting signal region) with PEX7; leading to its translocation into peroxisomes.

The protein localises to the peroxisome. It catalyses the reaction an acyl-CoA + acetyl-CoA = a 3-oxoacyl-CoA + CoA. The enzyme catalyses 2 acetyl-CoA = acetoacetyl-CoA + CoA. The catalysed reaction is tetradecanoyl-CoA + acetyl-CoA = 3-oxohexadecanoyl-CoA + CoA. It carries out the reaction hexanoyl-CoA + acetyl-CoA = 3-oxooctanoyl-CoA + CoA. It catalyses the reaction 3-oxohexadecanedioyl-CoA + CoA = tetradecanedioyl-CoA + acetyl-CoA. The enzyme catalyses 3-oxo-(6Z,9Z,12Z,15Z,18Z,21Z)-tetracosahexaenoyl-CoA + CoA = (4Z,7Z,10Z,13Z,16Z,19Z)-docosahexaenoyl-CoA + acetyl-CoA. It participates in lipid metabolism; peroxisomal fatty acid beta-oxidation. Responsible for the thiolytic cleavage of straight chain 3-keto fatty acyl-CoAs (3-oxoacyl-CoAs). Plays an important role in fatty acid peroxisomal beta-oxidation. Catalyzes the cleavage of short, medium, long, and very long straight chain 3-oxoacyl-CoAs. The polypeptide is 3-ketoacyl-CoA thiolase, peroxisomal (Homo sapiens (Human)).